The chain runs to 288 residues: Putative aryl-alcohol dehydrogenase AAD10 (288 aa).

It belongs to the aldo/keto reductase family. Aldo/keto reductase 2 subfamily.

This chain is Putative aryl-alcohol dehydrogenase AAD10 (AAD10), found in Saccharomyces cerevisiae (strain ATCC 204508 / S288c) (Baker's yeast).